The primary structure comprises 321 residues: Mechanosensory protein 3 (321 aa).

2 consecutive LIM zinc-binding domains span residues 27–86 and 87–152; these read NKCN…DHSI and HRCA…QMDD. Residues 217–276 constitute a DNA-binding region (homeobox); it reads RRGPRTTIKQNQLDVLNEMFSNTPKPSKHARAKLALETGLSMRVIQVWFQNRRSKERRLK.

As to quaternary structure, interacts with unc-86; the heterooligomer binds to the promoters of mec-3, mec-4 and mec-7. In terms of tissue distribution, expressed in the mechanosensory neurons ALML, ALMR, PLML, PLMR, AVM and PVM, and the FLPL and FLPR neurons.

It localises to the nucleus. In terms of biological role, transcription factor. Specifies differentiation of the set of six touch receptor neurons (TRNs). May positively modulate expression of both its own gene and also of homeobox ARX homolog alr-1 in TRNs, forming a positive feedback loop with alr-1, thereby restricting the variability of expression of mec-3. Required to determine the identity of ALM sensory neurons, acting by interacting with unc-86, thereby preventing unc-86 cooperating with pag-3 to induce BDU-neuron specific genes. Binds cooperatively as a heterodimer with unc-86 to sites in the mec-3 gene promoter. Promotes outgrowth of lateral dendritic branches on the PVD nociceptive neurons, probably acting both directly, and upstream of zinc finger protein egl-46. This chain is Mechanosensory protein 3 (mec-3), found in Caenorhabditis elegans.